A 325-amino-acid chain; its full sequence is Endo-1,4-beta-xylanase 2 (325 aa).

Positions 1 to 18 are cleaved as a signal peptide; it reads MLYTSIFAAAMAASGAMA. Residues 26 to 325 enclose the GH10 domain; the sequence is ASNCTTLDSF…KAAVKAIMAI (300 aa). N-linked (GlcNAc...) asparagine glycosylation is present at asparagine 28. The Proton donor role is filled by glutamate 157. The active-site Nucleophile is the glutamate 262. Residues cysteine 280 and cysteine 286 are joined by a disulfide bond.

This sequence belongs to the glycosyl hydrolase 10 (cellulase F) family.

Its subcellular location is the secreted. The enzyme catalyses Endohydrolysis of (1-&gt;4)-beta-D-xylosidic linkages in xylans.. It functions in the pathway glycan degradation; xylan degradation. Functionally, endo-1,4-beta-xylanase involved in the hydrolysis of xylan, a major structural heterogeneous polysaccharide found in plant biomass representing the second most abundant polysaccharide in the biosphere, after cellulose. In Claviceps purpurea (Ergot fungus), this protein is Endo-1,4-beta-xylanase 2 (xyl2).